Here is a 3456-residue protein sequence, read N- to C-terminus: Genome polyprotein (3456 aa).

A Peptidase S30 domain is found at 600–743; it reads NVANIPLDDF…ATRLKQIQFY (144 aa). Residues H640, D652, and S689 each act as for P1 proteinase activity in the active site. The Peptidase C6 domain occupies 1075 to 1196; that stretch reads VWEFNEGYCY…EGEMLTYKVG (122 aa). C1083 serves as the catalytic For helper component proteinase activity. The stretch at 1094 to 1126 is one HAT 1 repeat; sequence FINEDEMEFYKNQMNQIVLNLGAWPTFEQYLVE. The For helper component proteinase activity role is filled by H1155. The 152-residue stretch at 1617-1768 folds into the Helicase ATP-binding domain; that stretch reads NIRTSGETDV…TRHKIKVETL (152 aa). 1630–1637 provides a ligand contact to ATP; the sequence is SGVGGGKS. Residues 1787–1947 enclose the Helicase C-terminal domain; sequence DATSVGDVIL…GIKPVCDRVD (161 aa). Y2304 is subject to O-(5'-phospho-RNA)-tyrosine. The 225-residue stretch at 2412–2636 folds into the Peptidase C4 domain; the sequence is AVDSHVGTPT…VEWSRLLPTT (225 aa). Active-site for nuclear inclusion protein A activity residues include H2457, D2494, and C2566. Residues 2597 to 2629 form an HAT 2 repeat; the sequence is HIFEPVNETFIEMLAKMEYAKGFWKFNPELVEW. The 121-residue stretch at 2891–3011 folds into the RdRp catalytic domain; sequence WVFIDCDGSR…NCPRSTANAI (121 aa). The stretch at 3082–3115 is one HAT 3 repeat; sequence LNAAYIESFGYEDLMTEIEKFAHFWAKKHGLNDV.

In terms of processing, VPg is uridylylated by the polymerase and is covalently attached to the 5'-end of the genomic RNA. This uridylylated form acts as a nucleotide-peptide primer for the polymerase. Post-translationally, genome polyprotein of potyviruses undergoes post-translational proteolytic processing by the main proteinase NIa-pro resulting in the production of at least ten individual proteins. The P1 proteinase and the HC-pro cleave only their respective C-termini autocatalytically. 6K1 is essential for proper proteolytic separation of P3 from CI.

It is found in the host cytoplasmic vesicle. The protein localises to the virion. It carries out the reaction RNA(n) + a ribonucleoside 5'-triphosphate = RNA(n+1) + diphosphate. The catalysed reaction is Hydrolyzes glutaminyl bonds, and activity is further restricted by preferences for the amino acids in P6 - P1' that vary with the species of potyvirus, e.g. Glu-Xaa-Xaa-Tyr-Xaa-Gln-|-(Ser or Gly) for the enzyme from tobacco etch virus. The natural substrate is the viral polyprotein, but other proteins and oligopeptides containing the appropriate consensus sequence are also cleaved.. The enzyme catalyses Hydrolyzes a Gly-|-Gly bond at its own C-terminus, commonly in the sequence -Tyr-Xaa-Val-Gly-|-Gly, in the processing of the potyviral polyprotein.. Its function is as follows. Required for aphid transmission and also has proteolytic activity. Only cleaves a Gly-Gly dipeptide at its own C-terminus. Interacts with virions and aphid stylets. Acts as a suppressor of RNA-mediated gene silencing, also known as post-transcriptional gene silencing (PTGS), a mechanism of plant viral defense that limits the accumulation of viral RNAs. May have RNA-binding activity. In terms of biological role, has helicase activity. It may be involved in replication. Indispensable for virus replication. Functionally, mediates the cap-independent, EIF4E-dependent translation of viral genomic RNAs. Binds to the cap-binding site of host EIF4E and thus interferes with the host EIF4E-dependent mRNA export and translation. VPg-RNA directly binds EIF4E and is a template for transcription. Also forms trimeric complexes with EIF4E-EIF4G, which are templates for translation. Its function is as follows. Has RNA-binding and proteolytic activities. In terms of biological role, an RNA-dependent RNA polymerase that plays an essential role in the virus replication. Involved in aphid transmission, cell-to-cell and systemis movement, encapsidation of the viral RNA and in the regulation of viral RNA amplification. This Sweet potato mild mottle virus (isolate Salazar) (SPMMV) protein is Genome polyprotein.